Here is a 160-residue protein sequence, read N- to C-terminus: Large ribosomal subunit protein uL11 (160 aa).

It belongs to the universal ribosomal protein uL11 family. In terms of assembly, part of the ribosomal stalk of the 50S ribosomal subunit. Interacts with L10 and the large rRNA to form the base of the stalk. L10 forms an elongated spine to which L12 dimers bind in a sequential fashion forming a multimeric L10(L12)X complex.

In terms of biological role, forms part of the ribosomal stalk which helps the ribosome interact with GTP-bound translation factors. This is Large ribosomal subunit protein uL11 from Nanoarchaeum equitans (strain Kin4-M).